The primary structure comprises 489 residues: UDP-N-acetylmuramate--L-alanine ligase (489 aa).

128-134 (GTHGKTT) serves as a coordination point for ATP.

It belongs to the MurCDEF family.

The protein localises to the cytoplasm. It catalyses the reaction UDP-N-acetyl-alpha-D-muramate + L-alanine + ATP = UDP-N-acetyl-alpha-D-muramoyl-L-alanine + ADP + phosphate + H(+). It functions in the pathway cell wall biogenesis; peptidoglycan biosynthesis. Cell wall formation. The protein is UDP-N-acetylmuramate--L-alanine ligase of Shewanella halifaxensis (strain HAW-EB4).